The chain runs to 407 residues: Arginine deiminase (407 aa).

C397 acts as the Amidino-cysteine intermediate in catalysis.

Belongs to the arginine deiminase family.

The protein localises to the cytoplasm. The enzyme catalyses L-arginine + H2O = L-citrulline + NH4(+). Its pathway is amino-acid degradation; L-arginine degradation via ADI pathway; carbamoyl phosphate from L-arginine: step 1/2. In Salmonella choleraesuis (strain SC-B67), this protein is Arginine deiminase.